The primary structure comprises 120 residues: Large ribosomal subunit protein uL18 (120 aa).

It belongs to the universal ribosomal protein uL18 family. In terms of assembly, part of the 50S ribosomal subunit; part of the 5S rRNA/L5/L18/L25 subcomplex. Contacts the 5S and 23S rRNAs.

Its function is as follows. This is one of the proteins that bind and probably mediate the attachment of the 5S RNA into the large ribosomal subunit, where it forms part of the central protuberance. The chain is Large ribosomal subunit protein uL18 from Rhodopseudomonas palustris (strain BisA53).